The primary structure comprises 126 residues: Ribosome-binding factor A (126 aa).

This sequence belongs to the RbfA family. Monomer. Binds 30S ribosomal subunits, but not 50S ribosomal subunits or 70S ribosomes.

The protein localises to the cytoplasm. Functionally, one of several proteins that assist in the late maturation steps of the functional core of the 30S ribosomal subunit. Associates with free 30S ribosomal subunits (but not with 30S subunits that are part of 70S ribosomes or polysomes). Required for efficient processing of 16S rRNA. May interact with the 5'-terminal helix region of 16S rRNA. The chain is Ribosome-binding factor A from Geobacillus sp. (strain WCH70).